Here is a 325-residue protein sequence, read N- to C-terminus: Phenylalanine--tRNA ligase alpha subunit (325 aa).

Position 251 (Glu-251) interacts with Mg(2+).

This sequence belongs to the class-II aminoacyl-tRNA synthetase family. Phe-tRNA synthetase alpha subunit type 1 subfamily. Tetramer of two alpha and two beta subunits. Mg(2+) serves as cofactor.

Its subcellular location is the cytoplasm. The catalysed reaction is tRNA(Phe) + L-phenylalanine + ATP = L-phenylalanyl-tRNA(Phe) + AMP + diphosphate + H(+). The protein is Phenylalanine--tRNA ligase alpha subunit of Thermotoga petrophila (strain ATCC BAA-488 / DSM 13995 / JCM 10881 / RKU-1).